Reading from the N-terminus, the 209-residue chain is Uracil phosphoribosyltransferase (209 aa).

5-phospho-alpha-D-ribose 1-diphosphate contacts are provided by residues arginine 79, arginine 104, and 131-139 (DPMLATGGS). Uracil is bound by residues isoleucine 194 and 199–201 (GDA). Aspartate 200 is a binding site for 5-phospho-alpha-D-ribose 1-diphosphate.

It belongs to the UPRTase family. Requires Mg(2+) as cofactor.

It catalyses the reaction UMP + diphosphate = 5-phospho-alpha-D-ribose 1-diphosphate + uracil. The protein operates within pyrimidine metabolism; UMP biosynthesis via salvage pathway; UMP from uracil: step 1/1. Allosterically activated by GTP. Functionally, catalyzes the conversion of uracil and 5-phospho-alpha-D-ribose 1-diphosphate (PRPP) to UMP and diphosphate. The chain is Uracil phosphoribosyltransferase from Geobacter sp. (strain M21).